A 1040-amino-acid polypeptide reads, in one-letter code: FHF complex subunit HOOK-interacting protein 1A (1040 aa).

Disordered stretches follow at residues 555-613, 653-746, and 769-808; these read PQQL…PIDP, SEDM…AAHP, and LMEQ…EDEE. Basic and acidic residues predominate over residues 653 to 664; sequence SEDMKDSQEEAA. Polar residues predominate over residues 677-690; sequence VPINNGPLLSTQPE. 2 stretches are compositionally biased toward basic and acidic residues: residues 696 to 719 and 783 to 804; these read EWNR…REPE and TKEE…KKEL.

This sequence belongs to the FHIP family. As to quaternary structure, may be a component of the FTS/Hook/FHIP complex (FHF complex), composed of AKTIP/FTS, FHIP1B, and one or more members of the Hook family of proteins HOOK1, HOOK2, and HOOK3. May interact directly with AKTIP/FTS.

Its function is as follows. Probable component of the FTS/Hook/FHIP complex (FHF complex). FHF complex promotes the distribution of AP-4 complex to the perinuclear area of the cell. This is FHF complex subunit HOOK-interacting protein 1A from Homo sapiens (Human).